A 210-amino-acid polypeptide reads, in one-letter code: Glutathione S-transferase P 1 (210 aa).

Residues 1–80 (PEYTIIYFNA…LLARNHDLYG (80 aa)) form the GST N-terminal domain. Residues Y7, R13, W38, K44, 51-52 (QL), and 64-65 (QS) each bind glutathione. Residues 82 to 203 (NPREASLIDM…SSDAHKKRPI (122 aa)) enclose the GST C-terminal domain.

It belongs to the GST superfamily. Pi family. In terms of assembly, homodimer.

The protein resides in the cytoplasm. The protein localises to the mitochondrion. Its subcellular location is the nucleus. The enzyme catalyses RX + glutathione = an S-substituted glutathione + a halide anion + H(+). In terms of biological role, conjugation of reduced glutathione to a wide number of exogenous and endogenous hydrophobic electrophiles. In Bufo bufo (European toad), this protein is Glutathione S-transferase P 1.